Reading from the N-terminus, the 144-residue chain is MVVRREKKSRKMRGSRTMGWGIRGQHRDRGSQGGRQIGMHKEKWSWLVKYGKGWYGKHGFRNPTTKLTSAISLRKLNELLESGYIKIKEMDGKKIVDLNELGYNKLLGGGSISIPVTIKVGKATNKAIQKVKEMGGEVILSPTE.

Basic residues predominate over residues 1-14 (MVVRREKKSRKMRG). The interval 1–35 (MVVRREKKSRKMRGSRTMGWGIRGQHRDRGSQGGR) is disordered.

Belongs to the universal ribosomal protein uL15 family. In terms of assembly, part of the 50S ribosomal subunit.

In terms of biological role, binds to the 23S rRNA. This is Large ribosomal subunit protein uL15 from Saccharolobus solfataricus (strain ATCC 35092 / DSM 1617 / JCM 11322 / P2) (Sulfolobus solfataricus).